The chain runs to 77 residues: UPF0270 protein Spro_4577 (77 aa).

This sequence belongs to the UPF0270 family.

The polypeptide is UPF0270 protein Spro_4577 (Serratia proteamaculans (strain 568)).